The primary structure comprises 79 residues: Succinate dehydrogenase assembly factor 1, mitochondrial (79 aa).

Belongs to the complex I LYR family. SDHAF1 subfamily. As to quaternary structure, interacts with sdh2 within an sdh1-sdh2 subcomplex.

It is found in the mitochondrion matrix. In terms of biological role, plays an essential role in the assembly of succinate dehydrogenase (SDH), an enzyme complex (also referred to as respiratory complex II) that is a component of both the tricarboxylic acid (TCA) cycle and the mitochondrial electron transport chain, and which couples the oxidation of succinate to fumarate with the reduction of ubiquinone (coenzyme Q) to ubiquinol. Promotes maturation of the iron-sulfur protein subunit sdh2 of the SDH catalytic dimer, protecting it from the deleterious effects of oxidants. May act together with SDHAF3. In Schizosaccharomyces pombe (strain 972 / ATCC 24843) (Fission yeast), this protein is Succinate dehydrogenase assembly factor 1, mitochondrial.